Reading from the N-terminus, the 399-residue chain is STOREKEEPER protein (399 aa).

Disordered regions lie at residues Met1 to Trp160 and Gly250 to Gln301. A compositionally biased stretch (acidic residues) spans Glu20–Glu54. Residues Lys69–Phe79 show a composition bias toward polar residues. 2 stretches are compositionally biased toward low complexity: residues Ser80–Ser100 and Ala116–Pro125. Composition is skewed to basic and acidic residues over residues Lys143–Ser152 and Lys270–Glu299.

Belongs to the GeBP family. Expressed in tubers and in leaves treated with sucrose.

The protein localises to the nucleus. In terms of biological role, may act as a transcriptional regulator. Binds specifically to the B-box motif, a promoter element that is required for the tuber-specific and sucrose inducible expression of the patatin gene. In Solanum tuberosum (Potato), this protein is STOREKEEPER protein.